The following is a 1420-amino-acid chain: DNA-directed RNA polymerase subunit beta' (1420 aa).

Zn(2+) is bound by residues Cys71, Cys73, Cys86, and Cys89. Mg(2+) contacts are provided by Asp461, Asp463, and Asp465. Zn(2+) contacts are provided by Cys815, Cys889, Cys896, and Cys899.

It belongs to the RNA polymerase beta' chain family. As to quaternary structure, the RNAP catalytic core consists of 2 alpha, 1 beta, 1 beta' and 1 omega subunit. When a sigma factor is associated with the core the holoenzyme is formed, which can initiate transcription. Requires Mg(2+) as cofactor. The cofactor is Zn(2+).

It carries out the reaction RNA(n) + a ribonucleoside 5'-triphosphate = RNA(n+1) + diphosphate. Functionally, DNA-dependent RNA polymerase catalyzes the transcription of DNA into RNA using the four ribonucleoside triphosphates as substrates. The chain is DNA-directed RNA polymerase subunit beta' from Haemophilus ducreyi (strain 35000HP / ATCC 700724).